The chain runs to 460 residues: Light-independent protochlorophyllide reductase subunit N (460 aa).

The [4Fe-4S] cluster site is built by cysteine 22, cysteine 47, and cysteine 107.

Belongs to the BchN/ChlN family. In terms of assembly, protochlorophyllide reductase is composed of three subunits; ChlL, ChlN and ChlB. Forms a heterotetramer of two ChlB and two ChlN subunits. The cofactor is [4Fe-4S] cluster.

The protein localises to the plastid. The protein resides in the cyanelle. The enzyme catalyses chlorophyllide a + oxidized 2[4Fe-4S]-[ferredoxin] + 2 ADP + 2 phosphate = protochlorophyllide a + reduced 2[4Fe-4S]-[ferredoxin] + 2 ATP + 2 H2O. It participates in porphyrin-containing compound metabolism; chlorophyll biosynthesis (light-independent). Its function is as follows. Component of the dark-operative protochlorophyllide reductase (DPOR) that uses Mg-ATP and reduced ferredoxin to reduce ring D of protochlorophyllide (Pchlide) to form chlorophyllide a (Chlide). This reaction is light-independent. The NB-protein (ChlN-ChlB) is the catalytic component of the complex. This chain is Light-independent protochlorophyllide reductase subunit N, found in Cyanophora paradoxa.